The following is a 406-amino-acid chain: Argininosuccinate synthase (406 aa).

Residues 12–20 (AYSGGLDTS) and alanine 39 each bind ATP. Tyrosine 90 and serine 95 together coordinate L-citrulline. Glycine 120 contacts ATP. The L-aspartate site is built by threonine 122, asparagine 126, and aspartate 127. Asparagine 126 provides a ligand contact to L-citrulline. Residues arginine 130, serine 179, serine 188, glutamate 264, and tyrosine 276 each coordinate L-citrulline.

It belongs to the argininosuccinate synthase family. Type 1 subfamily. Homotetramer.

It localises to the cytoplasm. It carries out the reaction L-citrulline + L-aspartate + ATP = 2-(N(omega)-L-arginino)succinate + AMP + diphosphate + H(+). It functions in the pathway amino-acid biosynthesis; L-arginine biosynthesis; L-arginine from L-ornithine and carbamoyl phosphate: step 2/3. This Citrifermentans bemidjiense (strain ATCC BAA-1014 / DSM 16622 / JCM 12645 / Bem) (Geobacter bemidjiensis) protein is Argininosuccinate synthase.